We begin with the raw amino-acid sequence, 366 residues long: MYGILVLEDGTIIRGDGFGAEAEVLGELVFNTSMTGYVEILTDPSYKGQIITMTYPLEGNYGVEKEWFESDGIKAEGFVVKDMTGLELDEFLKEYNIPGISGVDTRYITRKIRSKGVIRSLLKTSTNPITKDEETELIKKVVEYPDISEIDLVPEVSTKETVTYNAENEKTSCVLIDCGVKQSIVNCLVERGCSVIKVPYNSKKEEILSYNPDFVLVSNGPGDPENMLETVDTVKNLIGTLPVTGICLGHQLITIALGGKTYKLKFGHRGGNQPVKDIESGKVYITSQNHGFATDDKIVPAGSELMHMNLNDDTVEGIRKIESEDIKNTVWSVQYHPEAGPGPHDARFLFDEMVELGIKFKAEKAY.

A CPSase region spans residues 1-172; that stretch reads MYGILVLEDG…TYNAENEKTS (172 aa). L-glutamine is bound by residues Ser-45, Gly-220, and Gly-222. One can recognise a Glutamine amidotransferase type-1 domain in the interval 172-363; sequence SCVLIDCGVK…VELGIKFKAE (192 aa). The Nucleophile role is filled by Cys-247. L-glutamine contacts are provided by Leu-248, Gln-251, Asn-289, Gly-291, and Phe-292. Catalysis depends on residues His-336 and Glu-338.

It belongs to the CarA family. As to quaternary structure, composed of two chains; the small (or glutamine) chain promotes the hydrolysis of glutamine to ammonia, which is used by the large (or ammonia) chain to synthesize carbamoyl phosphate. Tetramer of heterodimers (alpha,beta)4.

The enzyme catalyses hydrogencarbonate + L-glutamine + 2 ATP + H2O = carbamoyl phosphate + L-glutamate + 2 ADP + phosphate + 2 H(+). It catalyses the reaction L-glutamine + H2O = L-glutamate + NH4(+). It participates in amino-acid biosynthesis; L-arginine biosynthesis; carbamoyl phosphate from bicarbonate: step 1/1. The protein operates within pyrimidine metabolism; UMP biosynthesis via de novo pathway; (S)-dihydroorotate from bicarbonate: step 1/3. Small subunit of the glutamine-dependent carbamoyl phosphate synthetase (CPSase). CPSase catalyzes the formation of carbamoyl phosphate from the ammonia moiety of glutamine, carbonate, and phosphate donated by ATP, constituting the first step of 2 biosynthetic pathways, one leading to arginine and/or urea and the other to pyrimidine nucleotides. The small subunit (glutamine amidotransferase) binds and cleaves glutamine to supply the large subunit with the substrate ammonia. The protein is Carbamoyl phosphate synthase small chain of Methanococcus maripaludis (strain C7 / ATCC BAA-1331).